The following is a 236-amino-acid chain: Large ribosomal subunit protein uL1 (236 aa).

The protein belongs to the universal ribosomal protein uL1 family. As to quaternary structure, part of the 50S ribosomal subunit.

In terms of biological role, binds directly to 23S rRNA. The L1 stalk is quite mobile in the ribosome, and is involved in E site tRNA release. Functionally, protein L1 is also a translational repressor protein, it controls the translation of the L11 operon by binding to its mRNA. The chain is Large ribosomal subunit protein uL1 from Protochlamydia amoebophila (strain UWE25).